The primary structure comprises 306 residues: Non-specific ribonucleoside hydrolase RihC (306 aa).

Residue H235 is part of the active site.

Belongs to the IUNH family. RihC subfamily.

Functionally, hydrolyzes both purine and pyrimidine ribonucleosides with a broad-substrate specificity. This is Non-specific ribonucleoside hydrolase RihC from Salmonella dublin (strain CT_02021853).